An 805-amino-acid chain; its full sequence is Ubiquitin carboxyl-terminal hydrolase 10-B (805 aa).

Disordered stretches follow at residues 136 to 173 (AIPDGSGNADSDGTSGTGQRERKKKKKRPPGYYSYLEG) and 284 to 305 (DTTENLGVTNGQTLESPEEDTV). 2 stretches are compositionally biased toward polar residues: residues 143–153 (NADSDGTSGTG) and 284–298 (DTTENLGVTNGQTLE). The 381-residue stretch at 422 to 802 (RGLINKGNWC…TAYLLYYRRV (381 aa)) folds into the USP domain. Catalysis depends on Cys431, which acts as the Nucleophile. Residues 573–600 (EEVNKEEQEGSDEEWEQVGPRNKSSVTR) form a disordered region. Residue His756 is the Proton acceptor of the active site.

Belongs to the peptidase C19 family. USP10 subfamily.

It is found in the cytoplasm. Its subcellular location is the nucleus. It carries out the reaction Thiol-dependent hydrolysis of ester, thioester, amide, peptide and isopeptide bonds formed by the C-terminal Gly of ubiquitin (a 76-residue protein attached to proteins as an intracellular targeting signal).. Functionally, hydrolase that can remove conjugated ubiquitin from target proteins such as p53/tp53, rps2/us5, rps3/us3, rps10/eS10, becn1, snx3 and cftr. Acts as an essential regulator of p53/tp53 stability: in unstressed cells, specifically deubiquitinates p53/tp53 in the cytoplasm, leading to counteracts MDM2 action and stabilize p53/tp53. Following DNA damage, translocates to the nucleus and deubiquitinates p53/tp53, leading to regulate the p53/TP53-dependent DNA damage response. Component of a regulatory loop that controls autophagy and p53/tp53 levels. Plays a key role in 40S ribosome subunit recycling when a ribosome has stalled during translation: acts both by inhibiting formation of stress granules, which store stalled translation pre-initiation complexes, and mediating deubiquitination of 40S ribosome subunits. Deubiquitinates cftr in early endosomes, enhancing its endocytic recycling. The polypeptide is Ubiquitin carboxyl-terminal hydrolase 10-B (usp10-b) (Xenopus laevis (African clawed frog)).